Here is a 103-residue protein sequence, read N- to C-terminus: Putative protein YmfH (103 aa).

Positions 1–34 are disordered; it reads MVNAAQRTRVKVEADNRPSVDTHPPGVQPSPGTG. Residues 10–20 are compositionally biased toward basic and acidic residues; sequence VKVEADNRPSV. A run of 2 helical transmembrane segments spans residues 42 to 62 and 73 to 93; these read MLCVVLAVPVFSLVLSGTALF and GLITRPILIAVATGALLCFVE.

The protein resides in the cell inner membrane. The chain is Putative protein YmfH (ymfH) from Escherichia coli (strain K12).